A 314-amino-acid polypeptide reads, in one-letter code: Mevalonate kinase (314 aa).

Position 103 to 109 (103 to 109) interacts with ATP; sequence GLGTSAA. Asp-150 serves as the catalytic Proton acceptor.

Belongs to the GHMP kinase family. Mevalonate kinase subfamily. In terms of assembly, homodimer. The cofactor is Mg(2+).

It is found in the cytoplasm. The catalysed reaction is (R)-mevalonate + ATP = (R)-5-phosphomevalonate + ADP + H(+). Its pathway is isoprenoid biosynthesis; isopentenyl diphosphate biosynthesis via mevalonate pathway; isopentenyl diphosphate from (R)-mevalonate: step 1/3. Catalyzes the phosphorylation of (R)-mevalonate (MVA) to (R)-mevalonate 5-phosphate (MVAP). Functions in the mevalonate (MVA) pathway leading to isopentenyl diphosphate (IPP), a key precursor for the biosynthesis of isoprenoid compounds such as archaeal membrane lipids. In Saccharolobus solfataricus (strain ATCC 35092 / DSM 1617 / JCM 11322 / P2) (Sulfolobus solfataricus), this protein is Mevalonate kinase.